A 214-amino-acid polypeptide reads, in one-letter code: Probable chorismate pyruvate-lyase (214 aa).

Residues Arg74, Leu112, and Glu173 each coordinate substrate. A disordered region spans residues 183–214 (AAPENTGAGGTRLPRRIDTHHTPSKQEERPES). The segment covering 197–214 (RRIDTHHTPSKQEERPES) has biased composition (basic and acidic residues).

Belongs to the UbiC family.

The protein resides in the cytoplasm. It catalyses the reaction chorismate = 4-hydroxybenzoate + pyruvate. The protein operates within cofactor biosynthesis; ubiquinone biosynthesis. In terms of biological role, removes the pyruvyl group from chorismate, with concomitant aromatization of the ring, to provide 4-hydroxybenzoate (4HB) for the ubiquinone pathway. The polypeptide is Probable chorismate pyruvate-lyase (Cupriavidus metallidurans (strain ATCC 43123 / DSM 2839 / NBRC 102507 / CH34) (Ralstonia metallidurans)).